The primary structure comprises 230 residues: CRP-like protein Clp (230 aa).

18-139 serves as a coordination point for a nucleoside 3',5'-cyclic phosphate; sequence PSLTLDAGTI…APRILYAIGV (122 aa). The 73-residue stretch at 158–230 folds into the HTH crp-type domain; the sequence is LDVTDRIVRT…GKTVVLYGTR (73 aa). Positions 190 to 209 form a DNA-binding region, H-T-H motif; the sequence is RQELARLVGCSREMAGRVLK.

Homodimer.

Its subcellular location is the cytoplasm. With respect to regulation, allosterically inhibited by cyclic di-GMP (c-di-GMP), which binds to Clp and abolishes its ability to bind its target gene promoter. In terms of biological role, global transcriptional regulator that regulates virulence factors production by activating or repressing the expression of a large set of genes in diffusible signal factor (DSF) pathway. The sequence is that of CRP-like protein Clp (clp) from Xanthomonas campestris pv. campestris (strain 8004).